A 119-amino-acid polypeptide reads, in one-letter code: Ribonuclease P protein component (119 aa).

The protein belongs to the RnpA family. As to quaternary structure, consists of a catalytic RNA component (M1 or rnpB) and a protein subunit.

It carries out the reaction Endonucleolytic cleavage of RNA, removing 5'-extranucleotides from tRNA precursor.. RNaseP catalyzes the removal of the 5'-leader sequence from pre-tRNA to produce the mature 5'-terminus. It can also cleave other RNA substrates such as 4.5S RNA. The protein component plays an auxiliary but essential role in vivo by binding to the 5'-leader sequence and broadening the substrate specificity of the ribozyme. This chain is Ribonuclease P protein component, found in Streptococcus equi subsp. equi (strain 4047).